The sequence spans 481 residues: PRAME family member 22 (481 aa).

The LRR 1; degenerate repeat unit spans residues 99-126 (RWKLQVLELRDVDENFWTIWSGARPLSC). One copy of the LRR 2; degenerate repeat lies at 181–205 (HLCCTKVVNYSMSILNFRNILETVY). An LRR 3; degenerate repeat occupies 206-232 (PDSIQVLEIWNMCWPCMIVEFSRYLSQ). One copy of the LRR 4; degenerate repeat lies at 233–267 (MRNLRKLFISDGCRYLLSSDSQEQLVAEFSSVLLR). 5 LRR repeats span residues 268–293 (LEYL…IRCL), 294–325 (RSPL…SQLK), 326–344 (QLNL…PLRA), 350–377 (AATL…ALSC), and 378–402 (CSNL…LLRH).

The protein belongs to the PRAME family.

In Homo sapiens (Human), this protein is PRAME family member 22.